The sequence spans 237 residues: DNA repair protein RecO (237 aa).

Belongs to the RecO family.

In terms of biological role, involved in DNA repair and RecF pathway recombination. This is DNA repair protein RecO from Actinobacillus succinogenes (strain ATCC 55618 / DSM 22257 / CCUG 43843 / 130Z).